Reading from the N-terminus, the 319-residue chain is Putative peptide permease protein BOV_A0351 (319 aa).

6 consecutive transmembrane segments (helical) span residues 9 to 29 (LLIGLGMLLALTILIFVLLQL), 102 to 122 (LLLMAAGLAIAIVIGVTTGII), 138 to 158 (LALLGISSPAFLTALLGLYVF), 182 to 202 (LLRHLALPALVLSIGHAALIM), 242 to 262 (LPVVTLIGSTIGLAVGGAIFI), and 284 to 304 (YPVIMGATLVIGACVIIVNIL). The region spanning 98–305 (IGPTLLLMAA…ACVIIVNILT (208 aa)) is the ABC transmembrane type-1 domain.

The protein belongs to the binding-protein-dependent transport system permease family. The complex is composed of two ATP-binding proteins (BOV_A0347 and BOV_A0348), two transmembrane proteins (BOV_A0350 and BOV_A0351) and a solute-binding protein (BOV_A0352).

It is found in the cell inner membrane. Its function is as follows. Probably part of an ABC transporter complex that could be involved in peptide import. Probably responsible for the translocation of the substrate across the membrane. The chain is Putative peptide permease protein BOV_A0351 from Brucella ovis (strain ATCC 25840 / 63/290 / NCTC 10512).